We begin with the raw amino-acid sequence, 60 residues long: uncharacterized protein (60 aa).

This sequence to E.coli YjeQ and H.influenzae HI_1714.

This is an uncharacterized protein from Azotobacter vinelandii.